We begin with the raw amino-acid sequence, 428 residues long: Glutamate-1-semialdehyde 2,1-aminomutase (428 aa).

Lys266 is subject to N6-(pyridoxal phosphate)lysine.

The protein belongs to the class-III pyridoxal-phosphate-dependent aminotransferase family. HemL subfamily. As to quaternary structure, homodimer. It depends on pyridoxal 5'-phosphate as a cofactor.

The protein resides in the cytoplasm. It catalyses the reaction (S)-4-amino-5-oxopentanoate = 5-aminolevulinate. Its pathway is porphyrin-containing compound metabolism; protoporphyrin-IX biosynthesis; 5-aminolevulinate from L-glutamyl-tRNA(Glu): step 2/2. This chain is Glutamate-1-semialdehyde 2,1-aminomutase, found in Herminiimonas arsenicoxydans.